Here is a 491-residue protein sequence, read N- to C-terminus: 2,3-bisphosphoglycerate-independent phosphoglycerate mutase (491 aa).

D11 and S61 together coordinate Mn(2+). Residue S61 is the Phosphoserine intermediate of the active site. Substrate contacts are provided by residues H118, R147–D148, R177, R183, R248–R251, and K320. 5 residues coordinate Mn(2+): D386, H390, D427, H428, and H445.

The protein belongs to the BPG-independent phosphoglycerate mutase family. As to quaternary structure, monomer. Mn(2+) serves as cofactor.

The enzyme catalyses (2R)-2-phosphoglycerate = (2R)-3-phosphoglycerate. The protein operates within carbohydrate degradation; glycolysis; pyruvate from D-glyceraldehyde 3-phosphate: step 3/5. In terms of biological role, catalyzes the interconversion of 2-phosphoglycerate and 3-phosphoglycerate. The chain is 2,3-bisphosphoglycerate-independent phosphoglycerate mutase from Aliarcobacter butzleri (strain RM4018) (Arcobacter butzleri).